A 247-amino-acid chain; its full sequence is Isoprenyl transferase (247 aa).

Asp-18 is an active-site residue. Asp-18 contributes to the Mg(2+) binding site. Residues 19-22, Trp-23, Arg-31, His-35, and 63-65 contribute to the substrate site; these read GNGR and SSE. Asn-66 serves as the catalytic Proton acceptor. Substrate contacts are provided by residues Trp-67, Arg-69, Arg-186, and 192–194; that span reads RLS. Glu-205 lines the Mg(2+) pocket.

It belongs to the UPP synthase family. In terms of assembly, homodimer. Requires Mg(2+) as cofactor.

In terms of biological role, catalyzes the condensation of isopentenyl diphosphate (IPP) with allylic pyrophosphates generating different type of terpenoids. This is Isoprenyl transferase from Agrobacterium fabrum (strain C58 / ATCC 33970) (Agrobacterium tumefaciens (strain C58)).